Consider the following 187-residue polypeptide: MNGDGEQPGPGDGAARDELPSMDLVRRTLAEARAAARARGQDPGRGFAAGPAPRRVAGRRRSWSGPGPDTRDPQPLGKLTRDLAKKRGWSGHVAEGTVLGQWSQVVGAQIADHATPTALNEGVLSVTAESTAWATQLRIMQSQLLAKIAAAVGNGVVTSLKITGPASPSWRKGPRHIAGRGPRDTYG.

The segment covering 1-12 (MNGDGEQPGPGD) has biased composition (gly residues). Disordered stretches follow at residues 1-77 (MNGD…QPLG) and 166-187 (ASPSWRKGPRHIAGRGPRDTYG). The span at 14–30 (AARDELPSMDLVRRTLA) shows a compositional bias: basic and acidic residues. Residues 31-55 (EARAAARARGQDPGRGFAAGPAPRR) are compositionally biased toward low complexity.

The protein belongs to the UPF0232 family.

The protein is UPF0232 protein MUL_0004 of Mycobacterium ulcerans (strain Agy99).